The primary structure comprises 245 residues: MNLAEVVRFLDDFLEINSYQDVSNNGLQVEGSEEVKKVAFAVDASMESFRAAKAVNADMLVVHHGLIWGGIGYIRGIVKRRIEFLLRSNLSLYAAHLPLDAHREVGNNAVILRKIGAEPQEEFGEYKGVKIGFSAKLEKATAVGEIAEKLGPAMVLPFGEERVRKVAAVSGKGCFALNEAIDAGVELFITGEPEHEAYHLAKEGGINVFFLGHYESEKFGVQSLMEVVREKLGIEAVFLDIPTNL.

Positions 63, 64, 100, 213, and 217 each coordinate a divalent metal cation.

It belongs to the GTP cyclohydrolase I type 2/NIF3 family. In terms of assembly, homohexamer.

This is GTP cyclohydrolase 1 type 2 homolog from Archaeoglobus fulgidus (strain ATCC 49558 / DSM 4304 / JCM 9628 / NBRC 100126 / VC-16).